A 462-amino-acid polypeptide reads, in one-letter code: Putative endoglucanase type B (462 aa).

Positions 1-16 (MAYKLILAAFAATALA) are cleaved as a signal peptide. A CBM1 domain is found at 25 to 61 (CSNGVWAQCGGQNWSGTPCCTSGNKCVKLNDFYSQCQ). Cystine bridges form between Cys-33/Cys-50 and Cys-44/Cys-60. Residue Asn-37 is glycosylated (N-linked (GlcNAc...) asparagine). Over residues 64 to 100 (SAEPSSTAAGPSSTTATKTTATGGSSTTAGGSVTSAP) the composition is skewed to low complexity. Residues 64–102 (SAEPSSTAAGPSSTTATKTTATGGSSTTAGGSVTSAPPA) are disordered. A linker region spans residues 66 to 99 (EPSSTAAGPSSTTATKTTATGGSSTTAGGSVTSA). The interval 100-462 (PPAASDNPYA…LLDNANPSFL (363 aa)) is catalytic. Residue Asp-190 is part of the active site. Cys-191 and Cys-250 form a disulfide bridge. N-linked (GlcNAc...) asparagine glycosylation is present at Asn-223. Asp-236 acts as the Proton donor in catalysis. 2 N-linked (GlcNAc...) asparagine glycosylation sites follow: Asn-272 and Asn-317. Residues Cys-383 and Cys-430 are joined by a disulfide bond. Asp-416 (nucleophile) is an active-site residue.

It belongs to the glycosyl hydrolase 6 (cellulase B) family.

The enzyme catalyses Endohydrolysis of (1-&gt;4)-beta-D-glucosidic linkages in cellulose, lichenin and cereal beta-D-glucans.. In Fusarium oxysporum (Fusarium vascular wilt), this protein is Putative endoglucanase type B.